A 322-amino-acid chain; its full sequence is Probable ethanolamine-phosphate cytidylyltransferase (322 aa).

Belongs to the cytidylyltransferase family.

It catalyses the reaction phosphoethanolamine + CTP + H(+) = CDP-ethanolamine + diphosphate. It functions in the pathway phospholipid metabolism; phosphatidylethanolamine biosynthesis; phosphatidylethanolamine from ethanolamine: step 2/3. This Encephalitozoon cuniculi (strain GB-M1) (Microsporidian parasite) protein is Probable ethanolamine-phosphate cytidylyltransferase (MUQ1).